The chain runs to 548 residues: CTP synthase (548 aa).

An amidoligase domain region spans residues M1 to C270. Residue S17 coordinates CTP. S17 lines the UTP pocket. ATP-binding positions include S18–L23 and D75. Mg(2+) is bound by residues D75 and E143. Residues D150–E152, K190–Q195, and K227 contribute to the CTP site. Residues K190–Q195 and K227 contribute to the UTP site. The 244-residue stretch at Y305–S548 folds into the Glutamine amidotransferase type-1 domain. Residue G356 coordinates L-glutamine. C383 (nucleophile; for glutamine hydrolysis) is an active-site residue. Residues F384 to Q387, E407, and R475 contribute to the L-glutamine site. Catalysis depends on residues H521 and E523.

The protein belongs to the CTP synthase family. Homotetramer.

It carries out the reaction UTP + L-glutamine + ATP + H2O = CTP + L-glutamate + ADP + phosphate + 2 H(+). The catalysed reaction is L-glutamine + H2O = L-glutamate + NH4(+). It catalyses the reaction UTP + NH4(+) + ATP = CTP + ADP + phosphate + 2 H(+). It participates in pyrimidine metabolism; CTP biosynthesis via de novo pathway; CTP from UDP: step 2/2. With respect to regulation, allosterically activated by GTP, when glutamine is the substrate; GTP has no effect on the reaction when ammonia is the substrate. The allosteric effector GTP functions by stabilizing the protein conformation that binds the tetrahedral intermediate(s) formed during glutamine hydrolysis. Inhibited by the product CTP, via allosteric rather than competitive inhibition. Catalyzes the ATP-dependent amination of UTP to CTP with either L-glutamine or ammonia as the source of nitrogen. Regulates intracellular CTP levels through interactions with the four ribonucleotide triphosphates. In Neorickettsia sennetsu (strain ATCC VR-367 / Miyayama) (Ehrlichia sennetsu), this protein is CTP synthase.